Reading from the N-terminus, the 458-residue chain is Biphenyl dioxygenase subunit alpha (458 aa).

Positions 58-156 constitute a Rieske domain; that stretch reads WLLLGHESHV…KEGDCGFDKA (99 aa). Positions 100, 102, 120, and 123 each coordinate [2Fe-2S] cluster. The Fe cation site is built by histidine 233 and histidine 239.

This sequence belongs to the bacterial ring-hydroxylating dioxygenase alpha subunit family. Heterohexamer consisting of three BphA subunits and three BphE subunits. A ferredoxin (BphF) and a ferredoxin reductase (BphG) must be present to obtain activity. The cofactor is [2Fe-2S] cluster. Requires Fe cation as cofactor.

The enzyme catalyses biphenyl + NADH + O2 + H(+) = (2R,3S)-3-phenylcyclohexa-3,5-diene-1,2-diol + NAD(+). The protein operates within xenobiotic degradation; biphenyl degradation; 2-hydroxy-2,4-pentadienoate and benzoate from biphenyl: step 1/4. The chain is Biphenyl dioxygenase subunit alpha (bphA) from Metapseudomonas furukawaii (Pseudomonas furukawaii).